We begin with the raw amino-acid sequence, 735 residues long: Disintegrin and metalloproteinase domain-containing protein 2 (735 aa).

The signal sequence occupies residues 1–16; that stretch reads MWRVLFLLSGLGGLWM. A propeptide spanning residues 17 to 174 is cleaved from the precursor; the sequence is DSNFDSLPVQ…FKLQSIEPQK (158 aa). At 17 to 686 the chain is on the extracellular side; it reads DSNFDSLPVQ…ENVYHSKPMR (670 aa). N76, N122, and N220 each carry an N-linked (GlcNAc...) asparagine glycan. One can recognise a Peptidase M12B domain in the interval 178–375; sequence KYIEMHVVVE…QKSQCLHNQP (198 aa). Intrachain disulfides connect C287/C370, C329/C354, C331/C336, and C445/C465. N-linked (GlcNAc...) asparagine glycosylation is found at N353, N459, and N566. One can recognise a Disintegrin domain in the interval 384-473; sequence QAVCGNAKLE…SCPENHFIQT (90 aa). The EGF-like domain maps to 612-645; sequence LGYDCTTDKCNHRGVCNNKKHCHCSASYLPPDCS. 3 disulfides stabilise this stretch: C616–C627, C621–C633, and C635–C644. A helical transmembrane segment spans residues 687–707; it reads WPLFLFIPFFIIFCVLIAIMV. Over 708–735 the chain is Cytoplasmic; that stretch reads KVHFQRKKWRTEDYSTDEQPESESEPKG. S729 bears the Phosphoserine mark.

Heterodimer with ADAM1/fertilin subunit alpha. The signal and the metalloprotease domain are cleaved during the epididymal maturation of the spermatozoa. In terms of tissue distribution, expressed specifically in testis.

The protein localises to the membrane. In terms of biological role, sperm surface membrane protein that may be involved in sperm-egg plasma membrane adhesion and fusion during fertilization. Could have a direct role in sperm-zona binding or migration of sperm from the uterus into the oviduct. Interactions with egg membrane could be mediated via binding between its disintegrin-like domain to one or more integrins receptors on the egg. This is a non catalytic metalloprotease-like protein. The sequence is that of Disintegrin and metalloproteinase domain-containing protein 2 (ADAM2) from Macaca fascicularis (Crab-eating macaque).